A 202-amino-acid polypeptide reads, in one-letter code: Na(+)-translocating NADH-quinone reductase subunit E (202 aa).

6 helical membrane-spanning segments follow: residues 11–31 (SIFIENLALAFFLGMCTYLAV), 39–59 (MGLGVAVIVVMTITVPVNNLL), 79–99 (LTFVGLISYIGVIAAIVQILE), 114–134 (GIFLPLITVNCAILGASLFMV), 144–164 (VTFGFGSGVGWALAIVLLAGI), and 180–200 (LGITFIVVGLMSFGFLSFSGI).

The protein belongs to the NqrDE/RnfAE family. Composed of six subunits; NqrA, NqrB, NqrC, NqrD, NqrE and NqrF.

The protein localises to the cell inner membrane. The enzyme catalyses a ubiquinone + n Na(+)(in) + NADH + H(+) = a ubiquinol + n Na(+)(out) + NAD(+). NQR complex catalyzes the reduction of ubiquinone-1 to ubiquinol by two successive reactions, coupled with the transport of Na(+) ions from the cytoplasm to the periplasm. NqrA to NqrE are probably involved in the second step, the conversion of ubisemiquinone to ubiquinol. This chain is Na(+)-translocating NADH-quinone reductase subunit E, found in Maridesulfovibrio salexigens (strain ATCC 14822 / DSM 2638 / NCIMB 8403 / VKM B-1763) (Desulfovibrio salexigens).